Here is a 186-residue protein sequence, read N- to C-terminus: Peptidoglycan-recognition protein SD (186 aa).

Residues 1–18 (MTWIGLLIVGLTAIAVQG) form the signal peptide. Residues 47 to 169 (AVIAHTAGGA…RQVSATMSPG (123 aa)) enclose the N-acetylmuramoyl-L-alanine amidase domain. A disulfide bond links Cys57 and Cys63. Asn181 carries N-linked (GlcNAc...) asparagine glycosylation.

It belongs to the N-acetylmuramoyl-L-alanine amidase 2 family.

The protein localises to the secreted. Peptidoglycan-recognition protein that plays a key role in innate immunity by binding to peptidoglycans (PGN) of Gram-positive bacteria and activating the Toll pathway. Has no activity against on Gram-negative bacteria and fungi. Shows some partial redundancy with PRPGP-SA in Gram-positive bacteria recognition. May act by activating the proteolytic cleavage of Spatzle and the subsequent activation of Toll pathway. Recognizes S.aureus PGN. In Drosophila simulans (Fruit fly), this protein is Peptidoglycan-recognition protein SD (PGRP-SD).